The primary structure comprises 159 residues: Na(+)/H(+) antiporter subunit E1 (159 aa).

4 helical membrane passes run 1-21 (MAVQ…VTNS), 27-47 (FVLG…VLPG), 49-69 (FYVI…IELI), and 101-121 (WQIV…VLGV).

It belongs to the CPA3 antiporters (TC 2.A.63) subunit E family. May form a heterooligomeric complex that consists of seven subunits: mnhA1, mnhB1, mnhC1, mnhD1, mnhE1, mnhF1 and mnhG1.

It localises to the cell membrane. Its function is as follows. Mnh complex is a Na(+)/H(+) antiporter involved in Na(+) excretion. This is Na(+)/H(+) antiporter subunit E1 (mnhE1) from Staphylococcus aureus (strain bovine RF122 / ET3-1).